The sequence spans 452 residues: Nebulette (452 aa).

The tract at residues 1–26 (MKVPVSGDVKEETEEENVEQEENQEA) is disordered. The segment covering 11–23 (EETEEENVEQEEN) has biased composition (acidic residues). 12 Nebulin repeats span residues 29 to 63 (SLKPVIEDLSMELARKCTELISDIHYKEEYKKSKD), 64 to 98 (KCTFVTDTPMLNHVKNIGAFISEAKYKGTIKADLS), 101 to 135 (LYKDMPATIDSVFAREVSQLQSEVAYKQKHEAEKG), 138 to 172 (DYTHMKEPPEVRRAMEVNRHQSNISYRKDMQGTHT), 173 to 199 (YTAELDRPDIKKATQISKIISDAEYKK), 206 to 240 (KEPSVIGRPDFEHAVGASKLSSQVKYKEKFDNEMK), 263 to 278 (LASDWEYKRDFEENKG), 279 to 313 (LYHFDAEAPEHLHHKGNATLQSQVKYREEYEKNKG), 315 to 349 (SMLEFVETPSYQSSKEAQKMQSEKVYKEDFEKEIK), 352 to 386 (SSLDLDKTPAFLHVKHITNLMREKEYKKDLENEIK), 389 to 423 (GMELSSEVLDIQRAKRASEMASEKDYKRDLETEIK), and 426 to 452 (GMQVSTDTLDVQRAKRASEMASQVRMV).

Interacts (via nebulin repeats 1-5) with DESM (via rod region). Interacts (via SH3 domain) with XIRP2.

It localises to the cytoplasm. In terms of biological role, binds to actin and plays an important role in the assembly of the Z-disk. May functionally link sarcomeric actin to the desmin intermediate filaments in the heart muscle sarcomeres. Isoform 2 might play a role in the assembly of focal adhesion. This Mus musculus (Mouse) protein is Nebulette (Nebl).